The sequence spans 316 residues: Nucleotide-binding protein NFA_35930 (316 aa).

Residue 32–39 coordinates ATP; it reads GLSGAGRG. Position 83-86 (83-86) interacts with GTP; the sequence is DVRS.

It belongs to the RapZ-like family.

In terms of biological role, displays ATPase and GTPase activities. The sequence is that of Nucleotide-binding protein NFA_35930 from Nocardia farcinica (strain IFM 10152).